A 134-amino-acid polypeptide reads, in one-letter code: MSNTAQNEKRLPVGKDISTRRRTARARRHFRIRKTLSGTPETPRLVIHRTSRHMHAQVIDDVAGHTLVAASTMEADVRAMEGDKKARGAKVGQLIAERAKAAGIEAVVFDRAGYKYHGRVAALADAAREGGLKF.

Positions 1 to 25 (MSNTAQNEKRLPVGKDISTRRRTAR) are disordered. The segment covering 7 to 19 (NEKRLPVGKDIST) has biased composition (basic and acidic residues).

This sequence belongs to the universal ribosomal protein uL18 family. As to quaternary structure, part of the 50S ribosomal subunit; part of the 5S rRNA/L5/L18/L25 subcomplex. Contacts the 5S and 23S rRNAs.

In terms of biological role, this is one of the proteins that bind and probably mediate the attachment of the 5S RNA into the large ribosomal subunit, where it forms part of the central protuberance. The protein is Large ribosomal subunit protein uL18 of Corynebacterium jeikeium (strain K411).